A 793-amino-acid chain; its full sequence is Protein smoothened (793 aa).

The first 30 residues, 1–30, serve as a signal peptide directing secretion; sequence MAAGRPVRGPELAPRRLLQLLLLVLLGGRG. Residues 31 to 237 are Extracellular-facing; sequence RGAALSGNVT…EAEHQDMHSY (207 aa). The tract at residues 35 to 61 is disordered; sequence LSGNVTGPGPRSAGGSARRNAPVTSPP. Asn-38 carries an N-linked (GlcNAc...) asparagine glycan. 5 cysteine pairs are disulfide-bonded: Cys-68–Cys-182, Cys-74–Cys-138, Cys-82–Cys-131, Cys-122–Cys-158, and Cys-151–Cys-173. The FZ domain occupies 69-185; the sequence is GRAAHCEPLR…DHFPEGCPNE (117 aa). Cholesterol is bound at residue Asp-99. Asn-192 is a glycosylation site (N-linked (GlcNAc...) asparagine). 3 disulfide bridges follow: Cys-197–Cys-217, Cys-221–Cys-299, and Cys-318–Cys-394. The chain crosses the membrane as a helical span at residues 238–258; it reads IAAFGAVTGLCTLFTLATFVA. Residues 259-266 are Cytoplasmic-facing; that stretch reads DWRNSNRY. Residues 267–287 form a helical membrane-spanning segment; sequence PAVILFYVNACFFVGSIGWLA. Over 288-318 the chain is Extracellular; sequence QFMDGARREIVCRADGTMRFGEPTSSETLSC. A helical transmembrane segment spans residues 319–339; it reads VIIFVIVYYALMAGVVWFVVL. The Cytoplasmic segment spans residues 340-362; that stretch reads TYAWHTSFKALGTTYQPLSGKTS. The chain crosses the membrane as a helical span at residues 363–383; sequence YFHLLTWSLPFVLTVAILAVA. Residues 384-406 lie on the Extracellular side of the membrane; sequence QVDGDSVSGICFVGYKNYRYRAG. Position 398 (Tyr-398) interacts with cholesterol. Residues 407 to 427 form a helical membrane-spanning segment; the sequence is FVLAPIGLVLIVGGYFLIRGV. Topologically, residues 428-455 are cytoplasmic; that stretch reads MTLFSIKSNHPGLLSEKAASKINETMLR. The helical transmembrane segment at 456 to 476 threads the bilayer; sequence LGIFGFLAFGFVLITFSCHFY. The Extracellular portion of the chain corresponds to 477–528; sequence DFFNQAEWERSFRDYVLCQANVTIGLPTKKPIPDCEIKNRPSLLVEKINLFA. Cys-494 and Cys-511 are disulfide-bonded. Asn-497 carries an N-linked (GlcNAc...) asparagine glycan. The chain crosses the membrane as a helical span at residues 529–549; the sequence is MFGTGIAMSTWVWTKATLLIW. Residues 542 to 573 are interaction with BBS5 and BBS7; it reads TKATLLIWRRTWCRLTGHSDDEPKRIKKSKMI. The Cytoplasmic segment spans residues 550–793; that stretch reads RRTWCRLTGH…AELLDADSDF (244 aa). Phosphoserine occurs at positions 560, 578, and 594. The required for interaction with PRKACA stretch occupies residues 574–657; the sequence is AKAFSKRREL…TPVPPEEQAN (84 aa). Positions 585–597 are interaction with DLG5; sequence QNPGQELSFSMHT. Phosphothreonine is present on Thr-597. Phosphoserine occurs at positions 599 and 642. A phosphothreonine mark is found at Thr-644 and Thr-648. Phosphoserine is present on Ser-666. The segment covering 674-684 has biased composition (basic residues); that stretch reads GRKKKRRKRKK. Residues 674 to 702 are disordered; that stretch reads GRKKKRRKRKKEVCPLGPAPELHHSAPVP.

It belongs to the G-protein coupled receptor Fz/Smo family. Homodimer. Interacts (via C-terminus) with protein kinase A catalytic subunit PRKACA; interacts with free PRKACA subunits and the interaction leads to sequestration of PRKACA at the membrane, preventing PRKACA-mediated phosphorylation of GLI transcription factors. Interacts with ARRB2. Interacts with KIF7. Interacts with BBS5 and BBS7; the interactions are indicative for the association of SMO with the BBsome complex to facilitate ciliary localization of SMO. Interacts with DLG5 and SDCBP. Interacts with GAS8/DRC4. Phosphorylation by GRK kinases is required for interaction with protein kinase A catalytic subunit PRKACA. As to expression, in embryo, found in the early neural folds and neural tube, pre-somitic mesoderm and somites, developing limb bud, gut, eye, testes, cartilage, muscle, lung, epiglottis, thymus, tongue, jaw, taste buds, teeth, and skin. In adult, found in multiple tissues including heart, brain, liver, lung, skeletal muscle, kidney and testis.

The protein resides in the cell membrane. It is found in the cell projection. Its subcellular location is the cilium. In terms of biological role, g protein-coupled receptor which associates with the patched protein (PTCH) to transduce hedgehog protein signaling. Binding of sonic hedgehog (SHH) to its receptor patched prevents inhibition of smoothened (SMO) by patched. When active, SMO binds to and sequesters protein kinase A catalytic subunit PRKACA at the cell membrane, preventing PRKACA-mediated phosphorylation of GLI transcription factors which releases the GLI proteins from PRKACA-mediated inhibition and allows for transcriptional activation of hedgehog pathway target genes. Required for the accumulation of KIF7, GLI2 and GLI3 in the cilia. Interacts with DLG5 at the ciliary base to induce the accumulation of KIF7 and GLI2 at the ciliary tip for GLI2 activation. The polypeptide is Protein smoothened (Smo) (Rattus norvegicus (Rat)).